Consider the following 461-residue polypeptide: Bifunctional protein HldE (461 aa).

The ribokinase stretch occupies residues 1–312 (MLEFLSQQKP…IKSFNRVDFE (312 aa)). 191–194 (NKKE) is a binding site for ATP. D259 is a catalytic residue. Positions 334 to 461 (FTNGCFDIVH…KIIEKIKDKK (128 aa)) are cytidylyltransferase.

It in the N-terminal section; belongs to the carbohydrate kinase PfkB family. In the C-terminal section; belongs to the cytidylyltransferase family. Homodimer.

It carries out the reaction D-glycero-beta-D-manno-heptose 7-phosphate + ATP = D-glycero-beta-D-manno-heptose 1,7-bisphosphate + ADP + H(+). The enzyme catalyses D-glycero-beta-D-manno-heptose 1-phosphate + ATP + H(+) = ADP-D-glycero-beta-D-manno-heptose + diphosphate. It functions in the pathway nucleotide-sugar biosynthesis; ADP-L-glycero-beta-D-manno-heptose biosynthesis; ADP-L-glycero-beta-D-manno-heptose from D-glycero-beta-D-manno-heptose 7-phosphate: step 1/4. The protein operates within nucleotide-sugar biosynthesis; ADP-L-glycero-beta-D-manno-heptose biosynthesis; ADP-L-glycero-beta-D-manno-heptose from D-glycero-beta-D-manno-heptose 7-phosphate: step 3/4. Functionally, catalyzes the phosphorylation of D-glycero-D-manno-heptose 7-phosphate at the C-1 position to selectively form D-glycero-beta-D-manno-heptose-1,7-bisphosphate. In terms of biological role, catalyzes the ADP transfer from ATP to D-glycero-beta-D-manno-heptose 1-phosphate, yielding ADP-D-glycero-beta-D-manno-heptose. The protein is Bifunctional protein HldE of Campylobacter jejuni subsp. doylei (strain ATCC BAA-1458 / RM4099 / 269.97).